A 94-amino-acid chain; its full sequence is Large ribosomal subunit protein bL25 (94 aa).

Belongs to the bacterial ribosomal protein bL25 family. As to quaternary structure, part of the 50S ribosomal subunit; part of the 5S rRNA/L5/L18/L25 subcomplex. Contacts the 5S rRNA. Binds to the 5S rRNA independently of L5 and L18.

In terms of biological role, this is one of the proteins that binds to the 5S RNA in the ribosome where it forms part of the central protuberance. The chain is Large ribosomal subunit protein bL25 from Shigella boydii serotype 4 (strain Sb227).